The sequence spans 678 residues: NADPH--cytochrome P450 reductase (678 aa).

Residues 1–21 (MADSNMDAGTTTSEMVAEEVS) are Lumenal-facing. The helical transmembrane segment at 22–42 (LFSTTDVILFSLIVGVMTYWF) threads the bilayer. Topologically, residues 43–678 (LFRKKKEEVP…KGRYSLDVWS (636 aa)) are cytoplasmic. At Ser-63 the chain carries Phosphoserine. Positions 80 to 224 (IIVFYGSQTG…DFITWREQFW (145 aa)) constitute a Flavodoxin-like domain. Residues 86 to 91 (SQTGTA), 138 to 141 (ATYG), 173 to 182 (LGNKTYEHFN), and Asp-208 contribute to the FMN site. An FAD-binding FR-type domain is found at 279-521 (KNPFLAVVTT…YVRKSQFRLP (243 aa)). Arg-298 provides a ligand contact to NADP(+). FAD-binding positions include Arg-424, 454-457 (RYYS), 472-474 (CAV), Tyr-478, and 488-491 (GVAT). NADP(+)-binding positions include Thr-535, 596 to 597 (SR), 602 to 606 (KVYVQ), and Asp-639. Trp-677 provides a ligand contact to FAD.

This sequence belongs to the NADPH--cytochrome P450 reductase family. The protein in the N-terminal section; belongs to the flavodoxin family. In the C-terminal section; belongs to the flavoprotein pyridine nucleotide cytochrome reductase family. It depends on FAD as a cofactor. The cofactor is FMN.

It localises to the endoplasmic reticulum membrane. It catalyses the reaction 2 oxidized [cytochrome P450] + NADPH = 2 reduced [cytochrome P450] + NADP(+) + H(+). In terms of biological role, this enzyme is required for electron transfer from NADP to cytochrome P450 in microsomes. It can also provide electron transfer to heme oxygenase and cytochrome B5. The sequence is that of NADPH--cytochrome P450 reductase from Bos taurus (Bovine).